A 1940-amino-acid polypeptide reads, in one-letter code: Myosin-13 (1940 aa).

The Myosin N-terminal SH3-like domain occupies 33–82 (DSKKACFAMDDKEMYVKGMIQSRENDKVTVKTLDDRTLTLNSDQVFPMNP). The region spanning 86 to 782 (DKIEDMAMMT…LLGLLEEMRD (697 aa)) is the Myosin motor domain. N6,N6,N6-trimethyllysine is present on lysine 130. 179–186 (GESGAGKT) lines the ATP pocket. Actin-binding stretches follow at residues 659 to 681 (LNKL…IPNE) and 761 to 775 (RFGH…GLLG). In terms of domain architecture, IQ spans 785–814 (LVTLMTRTQAICRGYLMRVEFKKMMERRES). A coiled-coil region spans residues 843–1940 (LLKSAEAERE…RDVGAQKMEE (1098 aa)). Residues 1886 to 1940 (RQAEEAEEQANTQMSKCRRVQHELEEAEERADIAESQVNKLRAKSRDVGAQKMEE) are disordered. Residues 1929–1940 (KSRDVGAQKMEE) show a composition bias toward basic and acidic residues.

It belongs to the TRAFAC class myosin-kinesin ATPase superfamily. Myosin family. In terms of assembly, muscle myosin is a hexameric protein that consists of 2 heavy chain subunits (MHC), 2 alkali light chain subunits (MLC) and 2 regulatory light chain subunits (MLC-2).

The protein localises to the cytoplasm. It localises to the myofibril. In terms of biological role, fast twitching myosin mediating the high-velocity and low-tension contractions of specific striated muscles. The protein is Myosin-13 (MYH13) of Canis lupus familiaris (Dog).